Here is a 998-residue protein sequence, read N- to C-terminus: Bifunctional glutamine synthetase adenylyltransferase/adenylyl-removing enzyme (998 aa).

The adenylyl removase stretch occupies residues 1 to 487 (MVVTKPATQR…LHAKLFYQPL (487 aa)). An adenylyl transferase region spans residues 492 to 998 (GPAGLEIRHG…KAVVRKVFGS (507 aa)).

This sequence belongs to the GlnE family. The cofactor is Mg(2+).

It catalyses the reaction [glutamine synthetase]-O(4)-(5'-adenylyl)-L-tyrosine + phosphate = [glutamine synthetase]-L-tyrosine + ADP. The enzyme catalyses [glutamine synthetase]-L-tyrosine + ATP = [glutamine synthetase]-O(4)-(5'-adenylyl)-L-tyrosine + diphosphate. Functionally, involved in the regulation of glutamine synthetase GlnA, a key enzyme in the process to assimilate ammonia. When cellular nitrogen levels are high, the C-terminal adenylyl transferase (AT) inactivates GlnA by covalent transfer of an adenylyl group from ATP to specific tyrosine residue of GlnA, thus reducing its activity. Conversely, when nitrogen levels are low, the N-terminal adenylyl removase (AR) activates GlnA by removing the adenylyl group by phosphorolysis, increasing its activity. The regulatory region of GlnE binds the signal transduction protein PII (GlnB) which indicates the nitrogen status of the cell. The sequence is that of Bifunctional glutamine synthetase adenylyltransferase/adenylyl-removing enzyme from Mycobacterium avium (strain 104).